The primary structure comprises 1032 residues: Histone lysine demethylase PHF8 (1032 aa).

The PHD-type zinc finger occupies 5-56; sequence PVYCLCRLPYDVTRFMIECDVCQDWFHGSCVGVEEDKAAEIDLYHCPNCQVT. The segment at 65–83 is linker; sequence RRGAVKHADVGLGRDSGRP. The 157-residue stretch at 199-355 folds into the JmjC domain; the sequence is FSDTRLSNLV…MQLRAYEIEK (157 aa). Thr248 is a binding site for substrate. Fe cation contacts are provided by His251 and Asp253. Lys268 is a substrate binding site. A Fe cation-binding site is contributed by His323. Disordered stretches follow at residues 455–515, 577–660, 697–857, 875–923, and 943–1015; these read SGTP…KGKE, QGKK…VDFD, LDSA…REGA, QQEQ…EPPV, and EYTA…ATAK. Positions 473 to 483 are enriched in polar residues; that stretch reads QLNTPLTFSQH. Positions 583 to 592 are enriched in low complexity; the sequence is AGSANGAGSS. A compositionally biased stretch (basic residues) spans 620–632; that stretch reads PRRRPSLPSKKKL. The span at 644 to 655 shows a compositional bias: basic and acidic residues; sequence PCSDPHRIREPG. 2 stretches are compositionally biased toward low complexity: residues 699-710 and 724-739; these read SALSEEAPASPS and PPSS…PLSI. Over residues 774–784 the composition is skewed to basic residues; the sequence is PGKRPIKRPAR. The segment covering 848 to 857 has biased composition (basic and acidic residues); sequence KQERPVREGA. Basic residues predominate over residues 882-891; the sequence is ITKRKYTKKK. Positions 970 to 990 are enriched in low complexity; the sequence is SRRPSLSPQNSSSYSPSAPSP.

It belongs to the JHDM1 histone demethylase family. JHDM1D subfamily. Fe(2+) serves as cofactor.

It localises to the nucleus. The protein localises to the nucleolus. It carries out the reaction N(6),N(6)-dimethyl-L-lysyl(36)-[histone H3] + 2 2-oxoglutarate + 2 O2 = L-lysyl(36)-[histone H3] + 2 formaldehyde + 2 succinate + 2 CO2. The catalysed reaction is N(6),N(6)-dimethyl-L-lysyl(9)-[histone H3] + 2 2-oxoglutarate + 2 O2 = L-lysyl(9)-[histone H3] + 2 formaldehyde + 2 succinate + 2 CO2. Its function is as follows. Histone lysine demethylase with selectivity for the di- and monomethyl states that plays a key role cell cycle progression, rDNA transcription and brain development. Demethylates mono- and dimethylated histone H3 'Lys-9' residue (H3K9Me1 and H3K9Me2), dimethylated H3 'Lys-27' (H3K27Me2) and monomethylated histone H4 'Lys-20' residue (H4K20Me1). Acts as a transcription activator as H3K9Me1, H3K9Me2, H3K27Me2 and H4K20Me1 are epigenetic repressive marks. Involved in cell cycle progression by being required to control G1-S transition. Acts as a coactivator of rDNA transcription, by activating polymerase I (pol I) mediated transcription of rRNA genes. Has activity toward H4K20Me1 only when nucleosome is used as a substrate and when not histone octamer is used as substrate. Required for brain development, probably by regulating expression of neuron-specific genes. The polypeptide is Histone lysine demethylase PHF8 (phf8) (Danio rerio (Zebrafish)).